The following is a 379-amino-acid chain: Lactosylceramide 1,3-N-acetyl-beta-D-glucosaminyltransferase A (379 aa).

The Cytoplasmic segment spans residues 1–12 (MFMNCRRVKKWH). Residues 13–30 (FLQLLSMCCVMSVLMVCW) form a helical; Signal-anchor for type II membrane protein membrane-spanning segment. At 31-379 (EHVDHHVVSH…NTYSCMAAFT (349 aa)) the chain is on the lumenal side. Residues N57, N113, N168, and N277 are each glycosylated (N-linked (GlcNAc...) asparagine).

Belongs to the glycosyltransferase 31 family.

The protein localises to the golgi apparatus membrane. The enzyme catalyses a beta-D-Gal-(1-&gt;4)-beta-D-Glc-(1&lt;-&gt;1)-Cer(d18:1(4E)) + UDP-N-acetyl-alpha-D-glucosamine = a beta-D-GlcNAc-(1-&gt;3)-beta-D-Gal-(1-&gt;4)-beta-D-Glc-(1&lt;-&gt;1)-Cer(d18:1(4E)) + UDP + H(+). It carries out the reaction a neolactoside nLc4Cer(d18:1(4E)) + UDP-N-acetyl-alpha-D-glucosamine = a neolactoside IV(3)-beta-GlcNAc-nLc4Cer(d18:1(4E)) + UDP + H(+). It participates in protein modification; protein glycosylation. Beta-1,3-N-acetylglucosaminyltransferase that plays a key role in the synthesis of lacto- or neolacto-series carbohydrate chains on glycolipids. In Danio rerio (Zebrafish), this protein is Lactosylceramide 1,3-N-acetyl-beta-D-glucosaminyltransferase A (b3gnt5a).